Here is a 141-residue protein sequence, read N- to C-terminus: Hemoglobin subunit alpha-3 (141 aa).

In terms of domain architecture, Globin spans 1–141; that stretch reads VLSPADKTNV…VSTVLTSKYR (141 aa). His58 is a binding site for O2. Heme b is bound at residue His87.

The protein belongs to the globin family. As to quaternary structure, heterotetramer of two alpha chains and two beta chains. In terms of tissue distribution, red blood cells.

Its function is as follows. Involved in oxygen transport from the lung to the various peripheral tissues. The sequence is that of Hemoglobin subunit alpha-3 from Pan troglodytes (Chimpanzee).